A 145-amino-acid chain; its full sequence is Transmembrane protein CCDC163 (145 aa).

Residues 38-54 (LIGLCICFFCSSGCIFL) form a helical membrane-spanning segment.

The protein localises to the membrane. This Homo sapiens (Human) protein is Transmembrane protein CCDC163.